We begin with the raw amino-acid sequence, 479 residues long: Muscarinic acetylcholine receptor M4 (479 aa).

The Extracellular portion of the chain corresponds to 1-31 (MANFTPVNGSSGNQSVRLVTSSSHNRYETVE). N-linked (GlcNAc...) asparagine glycosylation is found at Asn8 and Asn13. A helical transmembrane segment spans residues 32–54 (MVFIATVTGSLSLVTVVGNILVM). At 55-68 (LSIKVNRQLQTVNN) the chain is on the cytoplasmic side. The chain crosses the membrane as a helical span at residues 69 to 89 (YFLFSLACADLIIGAFSMNLY). Over 90 to 106 (TVYIIKGYWPLGAVVCD) the chain is Extracellular. A disulfide bridge links Cys105 with Cys185. The chain crosses the membrane as a helical span at residues 107–128 (LWLALDYVVSNASVMNLLIISF). The Cytoplasmic portion of the chain corresponds to 129–148 (DRYFCVTKPLTYPARRTTKM). A helical membrane pass occupies residues 149 to 171 (AGLMIAAAWVLSFVLWAPAILFW). The Extracellular segment spans residues 172–193 (QFVVGKRTVPDNQCFIQFLSNP). Residues 194–216 (AVTFGTAIAAFYLPVVIMTVLYI) form a helical membrane-spanning segment. Residues 217 to 401 (HISLASRSRV…AARERKVTRT (185 aa)) lie on the Cytoplasmic side of the membrane. Residues 271 to 333 (KLEEAPPPAL…PAPPLQPRAL (63 aa)) are disordered. Pro residues predominate over residues 275 to 286 (APPPALPPPPRP). Residues 294–304 (NESSSGSATQN) are compositionally biased toward polar residues. The chain crosses the membrane as a helical span at residues 402 to 422 (IFAILLAFILTWTPYNVMVLV). The Extracellular segment spans residues 423–436 (NTFCQSCIPDTVWS). A helical transmembrane segment spans residues 437–456 (IGYWLCYVNSTINPACYALC). At 457-479 (NATFKKTFRHLLLCQYRNIGTAR) the chain is on the cytoplasmic side. Thr459, Thr463, and Thr477 each carry phosphothreonine.

Belongs to the G-protein coupled receptor 1 family. Muscarinic acetylcholine receptor subfamily. CHRM4 sub-subfamily.

The protein resides in the cell membrane. It is found in the postsynaptic cell membrane. Its function is as follows. The muscarinic acetylcholine receptor mediates various cellular responses, including inhibition of adenylate cyclase, breakdown of phosphoinositides and modulation of potassium channels through the action of G proteins. Primary transducing effect is inhibition of adenylate cyclase. The polypeptide is Muscarinic acetylcholine receptor M4 (CHRM4) (Homo sapiens (Human)).